The following is a 280-amino-acid chain: Vitamin B12-binding protein (280 aa).

The N-terminal stretch at 1–27 (MMPLGLFPLPRAAAVLLISLLTLPAQA) is a signal peptide. The Fe/B12 periplasmic-binding domain occupies 30–277 (RVISLSPSTT…QMASIPTPVA (248 aa)). Tyr-57 contributes to the cyanocob(III)alamin binding site. Cys-190 and Cys-266 are disulfide-bonded.

It belongs to the BtuF family. As to quaternary structure, the complex is composed of two ATP-binding proteins (BtuD), two transmembrane proteins (BtuC) and a solute-binding protein (BtuF).

The protein localises to the periplasm. In terms of biological role, part of the ABC transporter complex BtuCDF involved in vitamin B12 import. Binds vitamin B12 and delivers it to the periplasmic surface of BtuC. This Yersinia pestis bv. Antiqua (strain Antiqua) protein is Vitamin B12-binding protein.